The primary structure comprises 194 residues: tRNA (pseudouridine(54)-N(1))-methyltransferase (194 aa).

Leu-125 provides a ligand contact to S-adenosyl-L-methionine.

It belongs to the methyltransferase superfamily. TrmY family. In terms of assembly, homodimer.

The protein resides in the cytoplasm. It catalyses the reaction pseudouridine(54) in tRNA + S-adenosyl-L-methionine = N(1)-methylpseudouridine(54) in tRNA + S-adenosyl-L-homocysteine + H(+). In terms of biological role, specifically catalyzes the N1-methylation of pseudouridine at position 54 (Psi54) in tRNAs. This Methanospirillum hungatei JF-1 (strain ATCC 27890 / DSM 864 / NBRC 100397 / JF-1) protein is tRNA (pseudouridine(54)-N(1))-methyltransferase.